The chain runs to 162 residues: MKRLLSAIVFPAMFISISNVYALDIQPGEWKMENIEMRTINPDTKEVLMDEKNSGIATLMCYTPKMSEDSKKMVKGFSTSAGGCTTTFVESTDTKLINETVCNNPDVKSHSIVETTKISDTEFAMTMKSDVDAGGNKTTSINKIKQTFVGKTCSEASKGVKQ.

This is an uncharacterized protein from Salmonella typhi.